A 175-amino-acid chain; its full sequence is MDLKRDWLRWKITIGSGPGSIVLDFPSFLVGCVFTTMMGPILQKLIGKLLVGLITVCKFLVIIGSIVFVIGVASKKYTYDDFKVSIKRSGEPGESHDMRTEPKRTAKTATVPMEKDEGVGSYNYFEIPITKETSTIPYINCDGTSSLRKPPNGPSSVGLSNSNRYENFINMARHK.

A run of 2 helical transmembrane segments spans residues 21 to 41 and 50 to 70; these read IVLD…MGPI and LVGL…VFVI.

The protein localises to the membrane. This is an uncharacterized protein from Saccharomyces cerevisiae (strain ATCC 204508 / S288c) (Baker's yeast).